The sequence spans 445 residues: Exodeoxyribonuclease 7 large subunit (445 aa).

It belongs to the XseA family. Heterooligomer composed of large and small subunits.

Its subcellular location is the cytoplasm. It carries out the reaction Exonucleolytic cleavage in either 5'- to 3'- or 3'- to 5'-direction to yield nucleoside 5'-phosphates.. Its function is as follows. Bidirectionally degrades single-stranded DNA into large acid-insoluble oligonucleotides, which are then degraded further into small acid-soluble oligonucleotides. This Shewanella oneidensis (strain ATCC 700550 / JCM 31522 / CIP 106686 / LMG 19005 / NCIMB 14063 / MR-1) protein is Exodeoxyribonuclease 7 large subunit.